The following is a 226-amino-acid chain: tRNA (guanine-N(7)-)-methyltransferase (226 aa).

4 residues coordinate S-adenosyl-L-methionine: Glu-57, Glu-82, Asp-109, and Asp-132. The active site involves Asp-132. Substrate-binding positions include Lys-136, Asp-168, and 205 to 208; that span reads TKFE.

It belongs to the class I-like SAM-binding methyltransferase superfamily. TrmB family.

It catalyses the reaction guanosine(46) in tRNA + S-adenosyl-L-methionine = N(7)-methylguanosine(46) in tRNA + S-adenosyl-L-homocysteine. It participates in tRNA modification; N(7)-methylguanine-tRNA biosynthesis. Catalyzes the formation of N(7)-methylguanine at position 46 (m7G46) in tRNA. This is tRNA (guanine-N(7)-)-methyltransferase from Legionella pneumophila subsp. pneumophila (strain Philadelphia 1 / ATCC 33152 / DSM 7513).